Here is a 113-residue protein sequence, read N- to C-terminus: Putative insulin-like growth factor 2-associated protein (113 aa).

In terms of tissue distribution, expressed in fetal and adult liver.

The chain is Putative insulin-like growth factor 2-associated protein from Homo sapiens (Human).